The chain runs to 341 residues: HTH-type transcriptional repressor PurR (341 aa).

Positions A2–V56 constitute an HTH lacI-type domain. Residues I4–N23 constitute a DNA-binding region (H-T-H motif). The DNA-binding element occupies S48 to V56. 5 residues coordinate hypoxanthine: Y73, R190, T192, F221, and D275.

Homodimer.

It functions in the pathway purine metabolism; purine nucleotide biosynthesis [regulation]. Is the main repressor of the genes involved in the de novo synthesis of purine nucleotides, regulating purB, purC, purEK, purF, purHD, purL, purMN and guaBA expression. PurR is allosterically activated to bind its cognate DNA by binding the purine corepressors, hypoxanthine or guanine, thereby effecting transcription repression. The polypeptide is HTH-type transcriptional repressor PurR (Shigella dysenteriae serotype 1 (strain Sd197)).